Consider the following 462-residue polypeptide: ATP synthase subunit beta (462 aa).

Position 151-158 (151-158) interacts with ATP; it reads GGAGVGKT.

The protein belongs to the ATPase alpha/beta chains family. As to quaternary structure, F-type ATPases have 2 components, CF(1) - the catalytic core - and CF(0) - the membrane proton channel. CF(1) has five subunits: alpha(3), beta(3), gamma(1), delta(1), epsilon(1). CF(0) has four main subunits: a(1), b(1), b'(1) and c(9-12).

It is found in the cell inner membrane. The catalysed reaction is ATP + H2O + 4 H(+)(in) = ADP + phosphate + 5 H(+)(out). Functionally, produces ATP from ADP in the presence of a proton gradient across the membrane. The catalytic sites are hosted primarily by the beta subunits. This chain is ATP synthase subunit beta, found in Chlorobium phaeobacteroides (strain BS1).